A 52-amino-acid chain; its full sequence is UPF0057 membrane protein PA0567 (52 aa).

The next 2 helical transmembrane spans lie at 6–26 (ILIA…FGGA) and 29–49 (LNIL…VYII).

Belongs to the UPF0057 (PMP3) family.

It is found in the cell membrane. The polypeptide is UPF0057 membrane protein PA0567 (Pseudomonas aeruginosa (strain ATCC 15692 / DSM 22644 / CIP 104116 / JCM 14847 / LMG 12228 / 1C / PRS 101 / PAO1)).